Consider the following 436-residue polypeptide: Platelet-activating factor acetylhydrolase (436 aa).

The first 21 residues, 1–21 (MAPPKLHTLFCLSGFLALVHP), serve as a signal peptide directing secretion. Asn-76 and Asn-200 each carry an N-linked (GlcNAc...) asparagine glycan. The active-site Nucleophile is the Ser-271. Asp-294 functions as the Charge relay system in the catalytic mechanism. A glycan (N-linked (GlcNAc...) asparagine) is linked at Asn-324. Residue His-349 is the Charge relay system of the active site.

It belongs to the AB hydrolase superfamily. Lipase family. N-glycosylated. In terms of tissue distribution, plasma.

Its subcellular location is the secreted. It is found in the extracellular space. It catalyses the reaction a 1-O-alkyl-2-acetyl-sn-glycero-3-phosphocholine + H2O = a 1-O-alkyl-sn-glycero-3-phosphocholine + acetate + H(+). It carries out the reaction 1-O-decyl-2-acetyl-sn-glycero-3-phosphocholine + H2O = 1-O-decyl-sn-glycero-3-phosphocholine + acetate + H(+). The catalysed reaction is 1-O-dodecyl-2-acetyl-sn-glycero-3-phosphocholine + H2O = 1-O-dodecyl-sn-glycero-3-phosphocholine + acetate + H(+). The enzyme catalyses 1-O-tetradecyl-2-acetyl-sn-glycero-3-phosphocholine + H2O = 1-O-tetradecyl-sn-glycero-3-phosphocholine + acetate + H(+). It catalyses the reaction 1-O-hexadecyl-2-acetyl-sn-glycero-3-phosphocholine + H2O = 1-O-hexadecyl-sn-glycero-3-phosphocholine + acetate + H(+). It carries out the reaction 1-O-octadecyl-2-acetyl-sn-glycero-3-phosphocholine + H2O = 1-O-octadecyl-sn-glycero-3-phosphocholine + acetate + H(+). The catalysed reaction is 1-hexadecanoyl-2-acetyl-sn-glycero-3-phosphocholine + H2O = 1-hexadecanoyl-sn-glycero-3-phosphocholine + acetate + H(+). The enzyme catalyses 1-hexadecanoyl-2-propionyl-sn-glycero-3-phosphocholine + H2O = propanoate + 1-hexadecanoyl-sn-glycero-3-phosphocholine + H(+). It catalyses the reaction 1-hexadecanoyl-2-butanoyl-sn-glycero-3-phosphocholine + H2O = butanoate + 1-hexadecanoyl-sn-glycero-3-phosphocholine + H(+). It carries out the reaction 1-hexadecanoyl-2-pentanoyl-sn-glycero-3-phosphocholine + H2O = pentanoate + 1-hexadecanoyl-sn-glycero-3-phosphocholine + H(+). The catalysed reaction is 1-hexadecanoyl-2-glutaroyl-sn-glycero-3-phosphocholine + H2O = glutarate + 1-hexadecanoyl-sn-glycero-3-phosphocholine + H(+). The enzyme catalyses 1-hexadecanoyl-2-(5-oxopentanoyl)-sn-glycero-3-phosphocholine + H2O = 5-oxopentanoate + 1-hexadecanoyl-sn-glycero-3-phosphocholine + H(+). It catalyses the reaction 1-hexadecanoyl-2-(9-oxononanoyl)-sn-glycero-3-phosphocholine + H2O = 9-oxononanoate + 1-hexadecanoyl-sn-glycero-3-phosphocholine + H(+). It carries out the reaction 1-hexadecanoyl-2-[9-hydroperoxy-(10E-octadecenoyl)]-sn-glycero-3-phosphocholine + H2O = 9-hydroperoxy-10E-octadecenoate + 1-hexadecanoyl-sn-glycero-3-phosphocholine + H(+). The catalysed reaction is 1-hexadecanoyl-2-(10-hydroperoxy-8E-octadecenoyl)-sn-glycero-3-phosphocholine + H2O = 10-hydroperoxy-(8E)-octadecenoate + 1-hexadecanoyl-sn-glycero-3-phosphocholine + H(+). Its function is as follows. Lipoprotein-associated calcium-independent phospholipase A2 involved in phospholipid catabolism during inflammatory and oxidative stress response. At the lipid-aqueous interface, hydrolyzes the ester bond of fatty acyl group attached at sn-2 position of phospholipids (phospholipase A2 activity). Specifically targets phospholipids with a short-chain fatty acyl group at sn-2 position. Can hydrolyze phospholipids with long fatty acyl chains, only if they carry oxidized functional groups. Hydrolyzes and inactivates platelet-activating factor (PAF, 1-O-alkyl-2-acetyl-sn-glycero-3-phosphocholine), a potent pro-inflammatory signaling lipid that acts through PTAFR on various innate immune cells. Hydrolyzes oxidatively truncated phospholipids carrying an aldehyde group at omega position, preventing their accumulation in lipoprotein particles and uncontrolled pro-inflammatory effects. As part of high-density lipoprotein (HDL) particles, can hydrolyze phospholipids having long-chain fatty acyl hydroperoxides at sn-2 position and protect against potential accumulation of these oxylipins in the vascular wall. Catalyzes the release from membrane phospholipids of F2-isoprostanes, lipid biomarkers of cellular oxidative damage. The sequence is that of Platelet-activating factor acetylhydrolase (PLA2G7) from Cavia porcellus (Guinea pig).